A 202-amino-acid chain; its full sequence is Dephospho-CoA kinase (202 aa).

In terms of domain architecture, DPCK spans 4–201 (VIGLTGGIAS…QKYLAMSKQN (198 aa)). 12–17 (ASGKTT) provides a ligand contact to ATP.

Belongs to the CoaE family.

Its subcellular location is the cytoplasm. It catalyses the reaction 3'-dephospho-CoA + ATP = ADP + CoA + H(+). The protein operates within cofactor biosynthesis; coenzyme A biosynthesis; CoA from (R)-pantothenate: step 5/5. Functionally, catalyzes the phosphorylation of the 3'-hydroxyl group of dephosphocoenzyme A to form coenzyme A. The sequence is that of Dephospho-CoA kinase from Vibrio vulnificus (strain CMCP6).